Consider the following 271-residue polypeptide: Insulin-like growth factor-binding protein 5 (271 aa).

A signal peptide spans Met-1–Gly-19. The IGFBP N-terminal domain occupies Ser-22–Glu-102. 6 disulfide bridges follow: Cys-26/Cys-52, Cys-29/Cys-54, Cys-37/Cys-55, Cys-44/Cys-58, Cys-66/Cys-79, and Cys-73/Cys-99. The span at Ala-109 to Pro-121 shows a compositional bias: basic and acidic residues. Residues Ala-109–Glu-129 form a disordered region. Ser-115 is subject to Phosphoserine. Positions Gln-188 to Cys-262 constitute a Thyroglobulin type-1 domain. Disulfide bonds link Cys-191–Cys-218, Cys-229–Cys-240, and Cys-242–Cys-262.

As to quaternary structure, interacts with IGF1; this interaction enhances the growth stimulatory effects of IGF1 on fibroblasts. Interacts with CAV1; this interaction allows trafficking of IGFBP5 from the plasma membrane to the nucleus. Interacts with NCL; this interaction is necessary for IGFBP5 localization to the nucleus.

It localises to the secreted. Its subcellular location is the cytoplasm. The protein resides in the nucleus. Functionally, multifunctional protein that plays a critical role in regulating the availability of IGFs to their receptors and thereby regulates IGF-mediated cellular processes including proliferation, differentiation, and apoptosis in a cell-type specific manner. Increases the cell proliferation of osteoblasts, intestinal smooth muscle cells and neuroblastoma cells. Enhances adhesion and survival of epithelial cells but decreases adhesion of mesenchymal cells. Once secreted, acts as a major mediator of mTORC1-dependent feedback inhibition of IGF1 signaling. Also plays a role in the induction of extracellular matrix (ECM) production and deposition independently of its nuclear translocation and binding to IGFs. Acts itself as a growth factor that can act independently of IGFs to regulate bone formation. Acts as a ligand for the ROR1 receptor which triggers formation of ROR1/HER2 heterodimer to enhance CREB oncogenic signaling. In Sus scrofa (Pig), this protein is Insulin-like growth factor-binding protein 5 (IGFBP5).